A 509-amino-acid chain; its full sequence is Maturase K (509 aa).

The protein belongs to the intron maturase 2 family. MatK subfamily.

The protein localises to the plastid. Its subcellular location is the chloroplast. Its function is as follows. Usually encoded in the trnK tRNA gene intron. Probably assists in splicing its own and other chloroplast group II introns. This chain is Maturase K, found in Nicotiana bigelovii (Bigelov's tobacco).